We begin with the raw amino-acid sequence, 134 residues long: MTDNNIMNLLNEDCILHILSFLADKDKIQLSLSCKSNLKFLHKTIYDDIYFYSKIKHLSYYHRFKYVVQDTMDDIDPQPSNIKWYILPAHYTNYAIGIRRQYNVYIKMDDTIVDENKIEKFIDKYTYDPYKYLD.

The region spanning 5-52 (NIMNLLNEDCILHILSFLADKDKIQLSLSCKSNLKFLHKTIYDDIYFY) is the F-box domain.

This is Putative F-box protein R638 from Acanthamoeba polyphaga mimivirus (APMV).